Consider the following 348-residue polypeptide: MNGTEGPNFYVPFSNKTGVVRSPFEYPQYYLAEPWQFSMLAAYMFLLIVLGFPINFLTLYVTVQHKKLRTPLNYILLNLAVADLFMVFGGFTTTLYTSLHGYFVFGPTGCNVEGFFATLGGEIALWSLVVLAIERYVVVCKPMSNFRFGENHAIMGVAFTWVMALACAAPPLAGWSRYIPEGMQCSCGIDYYTLKPEINNESFVIYMFVVHFAIPMIVIFFCYGQLVFTVKEAAAQQQESATTQKAEKEVTRMVIIMVIAFLICWVPYASVAFYIFTHQGSDFGPIFMTLPAFFAKSSSIYNPVIYIMMNKQFRNCMITTLCCGKNPLGDDEASASASKTETSQVAPA.

Position 1 is an N-acetylmethionine (M1). Residues 1–36 are Extracellular-facing; that stretch reads MNGTEGPNFYVPFSNKTGVVRSPFEYPQYYLAEPWQ. N-linked (GlcNAc...) asparagine glycosylation is found at N2 and N15. A helical membrane pass occupies residues 37-61; sequence FSMLAAYMFLLIVLGFPINFLTLYV. The Cytoplasmic segment spans residues 62 to 73; it reads TVQHKKLRTPLN. The helical transmembrane segment at 74–96 threads the bilayer; sequence YILLNLAVADLFMVFGGFTTTLY. Residues 97-110 lie on the Extracellular side of the membrane; the sequence is TSLHGYFVFGPTGC. Residues C110 and C187 are joined by a disulfide bond. The helical transmembrane segment at 111 to 133 threads the bilayer; the sequence is NVEGFFATLGGEIALWSLVVLAI. Positions 134 to 136 match the 'Ionic lock' involved in activated form stabilization motif; sequence ERY. Residues 134-152 are Cytoplasmic-facing; the sequence is ERYVVVCKPMSNFRFGENH. A helical transmembrane segment spans residues 153 to 173; that stretch reads AIMGVAFTWVMALACAAPPLA. Over 174–202 the chain is Extracellular; it reads GWSRYIPEGMQCSCGIDYYTLKPEINNES. E201 is a Zn(2+) binding site. A helical transmembrane segment spans residues 203 to 224; sequence FVIYMFVVHFAIPMIVIFFCYG. Residues 225-252 are Cytoplasmic-facing; it reads QLVFTVKEAAAQQQESATTQKAEKEVTR. The chain crosses the membrane as a helical span at residues 253–274; it reads MVIIMVIAFLICWVPYASVAFY. Residues 275–286 lie on the Extracellular side of the membrane; it reads IFTHQGSDFGPI. Zn(2+) is bound at residue Q279. Residues 287–308 traverse the membrane as a helical segment; it reads FMTLPAFFAKSSSIYNPVIYIM. K296 is subject to N6-(retinylidene)lysine. The Cytoplasmic portion of the chain corresponds to 309-348; that stretch reads MNKQFRNCMITTLCCGKNPLGDDEASASASKTETSQVAPA. 2 S-palmitoyl cysteine lipidation sites follow: C322 and C323. Residues 330–348 are interaction with SAG; that stretch reads DDEASASASKTETSQVAPA. S334 and S338 each carry phosphoserine. A phosphothreonine mark is found at T340 and T342. Residue S343 is modified to Phosphoserine.

Belongs to the G-protein coupled receptor 1 family. Opsin subfamily. Homodimer. May form a complex composed of RHO, GRK1 and RCVRN in a Ca(2+)-dependent manner; RCVRN prevents the interaction between GRK1 and RHO. Interacts with GRK1. Interacts (phosphorylated form) with SAG. Interacts with GNAT1. Interacts with GNAT3. SAG and G-proteins compete for a common binding site. Interacts with PRCD; the interaction promotes PRCD stability. Forms a complex with ASAP1 and ARF4. Forms a complex with ASAP1, RAB11A, Rabin8/RAB3IP, ARF4 and RAB11FIP3; the complex regulates Golgi-to-cilia rhodopsin/RHO transport in photoreceptors. Post-translationally, phosphorylated on some or all of the serine and threonine residues present in the C-terminal region. In terms of processing, contains one covalently linked retinal chromophore. Upon light absorption, the covalently bound 11-cis-retinal is converted to all-trans-retinal. After hydrolysis of the Schiff base and release of the covalently bound all-trans-retinal, active rhodopsin is regenerated by binding of a fresh molecule of 11-cis-retinal.

The protein resides in the membrane. It localises to the cell projection. Its subcellular location is the cilium. It is found in the photoreceptor outer segment. Photoreceptor required for image-forming vision at low light intensity. Required for photoreceptor cell viability after birth. Light-induced isomerization of 11-cis to all-trans retinal triggers a conformational change that activates signaling via G-proteins. Subsequent receptor phosphorylation mediates displacement of the bound G-protein alpha subunit by the arrestin SAG and terminates signaling. The protein is Rhodopsin (RHO) of Canis lupus familiaris (Dog).